Reading from the N-terminus, the 347-residue chain is Queuosine 5'-phosphate N-glycosylase/hydrolase (347 aa).

Queuine contacts are provided by H53, F237, D239, D321, and D326. D239 acts as the Nucleophile or transition state stabilizer in catalysis.

This sequence belongs to the QNG1 protein family.

It catalyses the reaction queuosine 5'-phosphate + H2O = queuine + D-ribose 5-phosphate. Its function is as follows. Catalyzes the hydrolysis of queuosine 5'-phosphate, releasing the nucleobase queuine (q). Is required for salvage of queuine from exogenous queuosine (Q) that is imported and then converted to queuosine 5'-phosphate intracellularly. This chain is Queuosine 5'-phosphate N-glycosylase/hydrolase, found in Nematostella vectensis (Starlet sea anemone).